We begin with the raw amino-acid sequence, 832 residues long: Sodium/hydrogen exchanger 3 (832 aa).

The signal sequence occupies residues 1 to 29 (MGRNRSGCVARCVSLTALVLLLCCPVVRS). Topologically, residues 30–66 (SEAETDPDSHTEHGDSHGGSREGNDTGFQIVTFRWEH) are extracellular. Residues 31-51 (EAETDPDSHTEHGDSHGGSRE) form a disordered region. The segment covering 36-51 (PDSHTEHGDSHGGSRE) has biased composition (basic and acidic residues). Residues 67–89 (VQTPYVIALWILVASLGKIVFHL) traverse the membrane as a helical segment. At 90 to 97 (SEKVTSVV) the chain is on the cytoplasmic side. The helical transmembrane segment at 98 to 117 (PESALLIVLGLILGGIVWAA) threads the bilayer. Over 118–126 (DHSASFTLT) the chain is Extracellular. A helical transmembrane segment spans residues 127-144 (PTVFFFYLLPPIVLDAGY). Residues 145-147 (FMP) are Cytoplasmic-facing. A helical membrane pass occupies residues 148–183 (NRHFFGNLGTILTYAVIGTVWNAATTGLSLYGVFLL). A 1,2-diacyl-sn-glycero-3-phospho-(1D-myo-inositol) is bound by residues Gly153, Gly156, and Thr157. The Extracellular segment spans residues 184 to 196 (GLMGDLKAGLLEF). Residues 197–218 (LLFGSLIAAVDPVAVLAVFEEV) traverse the membrane as a helical segment. Residues 219–220 (HV) are Cytoplasmic-facing. A helical transmembrane segment spans residues 221 to 252 (NEVLFIIVFGESLLNDAVTVVLYNVFNSFVEV). Over 253-259 (GAGNVQG) the chain is Extracellular. The helical transmembrane segment at 260 to 294 (LDYFKGIVSFFVVSLGGTAVGIIFAFILSLVTRFT) threads the bilayer. Over 295–296 (KH) the chain is Cytoplasmic. A helical transmembrane segment spans residues 297 to 319 (VRVIEPGFVFVISYLSYLTADML). At 320–321 (SL) the chain is on the extracellular side. A helical transmembrane segment spans residues 322 to 338 (SAILAITFCGICCQKYV). Topologically, residues 339-345 (KANLCEQ) are cytoplasmic. Residues 346 to 374 (SITTVRYAMKMLASGAETIIFMFLGISAV) traverse the membrane as a helical segment. The Extracellular segment spans residues 375–382 (NPTIWTWN). The helical transmembrane segment at 383-404 (TAFILLTLVFISVYRVIGVVIQ) threads the bilayer. Topologically, residues 405–417 (TWILNHYRVVQLE) are cytoplasmic. Residues 418–441 (IIDQVVMSYGGLRGAVAFALVVLL) traverse the membrane as a helical segment. Residues 442–448 (DSNYVGE) are Extracellular-facing. A helical membrane pass occupies residues 449 to 482 (RRLFVSTTIIVVYFTVIFQGLTIKPLVKWLKVKR). Residues 483 to 832 (SQHKEPLLNE…PLSFLPESSM (350 aa)) are Cytoplasmic-facing. The a 1,2-diacyl-sn-glycero-3-phospho-(1D-myo-inositol) site is built by Gln512, Ile513, and His515. The segment at 740–760 (TPASNDADETGTGIDNPSFSN) is disordered.

This sequence belongs to the monovalent cation:proton antiporter 1 (CPA1) transporter (TC 2.A.36) family. In terms of assembly, homodimer. As to expression, detected in early distal renal tubules in the kidney bundle zone, in proximal and late distal tubules in the kidney sinus zone, in absorptive epithelial cells of the intestine and in rectal epithelium (at protein level). Isoform 1 is expressed strongly in the gills, at intermediate levels in the kidney, spleen, rectum, spiral intestine and skin, and weakly in the brain, blood and rectal gland. Isoform 2 is expressed strongly in the kidney, rectum and spiral intestine, and weakly in muscles and the rectal gland.

It is found in the apical cell membrane. The protein localises to the cell membrane. Its subcellular location is the recycling endosome membrane. It localises to the early endosome membrane. It carries out the reaction Na(+)(in) + H(+)(out) = Na(+)(out) + H(+)(in). With respect to regulation, seems to switch between active and inactive modes in response to various stimuli. Activated directly or indirectly by membrane phosphatidylinositol (PIs). Regulated by a variety of auxiliary proteins, which facilitate the maturation, cell surface expression and function of the transporter. Inhibited specifically by the drug tenapanor. In terms of biological role, plasma membrane Na(+)/H(+) antiporter. Exchanges intracellular H(+) ions for extracellular Na(+) in 1:1 stoichiometry, playing a key role in salt and fluid absorption and pH homeostasis. Major apical Na(+)/H(+) exchanger in kidney and intestine playing an important role in renal and intestine Na(+) absorption and blood pressure regulation. This Triakis scyllium (Banded houndshark) protein is Sodium/hydrogen exchanger 3.